Consider the following 333-residue polypeptide: Ribosomal RNA small subunit methyltransferase H (333 aa).

S-adenosyl-L-methionine is bound by residues 31-33 (GGY), Asp49, Phe76, Asp134, and Gln141.

Belongs to the methyltransferase superfamily. RsmH family.

It is found in the cytoplasm. It catalyses the reaction cytidine(1402) in 16S rRNA + S-adenosyl-L-methionine = N(4)-methylcytidine(1402) in 16S rRNA + S-adenosyl-L-homocysteine + H(+). Specifically methylates the N4 position of cytidine in position 1402 (C1402) of 16S rRNA. The chain is Ribosomal RNA small subunit methyltransferase H from Wolbachia sp. subsp. Brugia malayi (strain TRS).